The following is a 338-amino-acid chain: Glyceraldehyde-3-phosphate dehydrogenase (338 aa).

Residues 13–14, Asp35, and Arg80 contribute to the NAD(+) site; that span reads RI. Residues 151 to 153, Thr182, 211 to 212, and Arg234 each bind D-glyceraldehyde 3-phosphate; these read SCT and TG. The Nucleophile role is filled by Cys152. Asn316 serves as a coordination point for NAD(+).

This sequence belongs to the glyceraldehyde-3-phosphate dehydrogenase family. In terms of assembly, homotetramer.

The protein resides in the cytoplasm. The enzyme catalyses D-glyceraldehyde 3-phosphate + phosphate + NAD(+) = (2R)-3-phospho-glyceroyl phosphate + NADH + H(+). It functions in the pathway carbohydrate degradation; glycolysis; pyruvate from D-glyceraldehyde 3-phosphate: step 1/5. The polypeptide is Glyceraldehyde-3-phosphate dehydrogenase (GPDA) (Colletotrichum gloeosporioides (Anthracnose fungus)).